The chain runs to 258 residues: Ubiquinone/menaquinone biosynthesis C-methyltransferase UbiE (258 aa).

A disordered region spans residues 1–21 (MSESRTSADGGMETSYGFREV). Residues Thr81, Asp102, and 130 to 131 (NA) contribute to the S-adenosyl-L-methionine site.

It belongs to the class I-like SAM-binding methyltransferase superfamily. MenG/UbiE family.

The catalysed reaction is a 2-demethylmenaquinol + S-adenosyl-L-methionine = a menaquinol + S-adenosyl-L-homocysteine + H(+). It catalyses the reaction a 2-methoxy-6-(all-trans-polyprenyl)benzene-1,4-diol + S-adenosyl-L-methionine = a 5-methoxy-2-methyl-3-(all-trans-polyprenyl)benzene-1,4-diol + S-adenosyl-L-homocysteine + H(+). Its pathway is quinol/quinone metabolism; menaquinone biosynthesis; menaquinol from 1,4-dihydroxy-2-naphthoate: step 2/2. It functions in the pathway cofactor biosynthesis; ubiquinone biosynthesis. In terms of biological role, methyltransferase required for the conversion of demethylmenaquinol (DMKH2) to menaquinol (MKH2) and the conversion of 2-polyprenyl-6-methoxy-1,4-benzoquinol (DDMQH2) to 2-polyprenyl-3-methyl-6-methoxy-1,4-benzoquinol (DMQH2). The protein is Ubiquinone/menaquinone biosynthesis C-methyltransferase UbiE of Rhizobium johnstonii (strain DSM 114642 / LMG 32736 / 3841) (Rhizobium leguminosarum bv. viciae).